Reading from the N-terminus, the 247-residue chain is ATP synthase subunit a 1 (247 aa).

6 consecutive transmembrane segments (helical) span residues 32–52 (YMLLAVVLIAGMMLAAGRALV), 82–102 (FFPLVFSLFMFIFVSNIVGII), 112–132 (IIVTFSLALLVFLTVIIYGFY), 141–161 (LFVPSGIPAVILPLVVVIEII), 181–201 (GHVTLKVFASFVTMLGALGFV), and 206–226 (ALLPLGLTVALTGLELMVAFL).

It belongs to the ATPase A chain family. In terms of assembly, F-type ATPases have 2 components, CF(1) - the catalytic core - and CF(0) - the membrane proton channel. CF(1) has five subunits: alpha(3), beta(3), gamma(1), delta(1), epsilon(1). CF(0) has four main subunits: a, b, b' and c.

It is found in the cell inner membrane. Functionally, key component of the proton channel; it plays a direct role in the translocation of protons across the membrane. The chain is ATP synthase subunit a 1 from Bradyrhizobium sp. (strain BTAi1 / ATCC BAA-1182).